Consider the following 674-residue polypeptide: Acyl-coenzyme A oxidase acox-1.1 (674 aa).

FAD is bound by residues 149 to 152 (YAQT), 157 to 158 (GT), and G191. Substrate-binding positions include 285–288 (KINY) and R295. FAD is bound by residues R320 and 340-343 (QQHR). ATP-binding residues include H342, S392, H396, and Q404. G411 is a binding site for FAD. 433–434 (YE) contacts substrate. The Proton acceptor role is filled by E434. E436 lines the FAD pocket. ATP-binding positions include 533–536 (RASR) and Y581. The Microbody targeting signal motif lies at 672-674 (SKL).

Belongs to the acyl-CoA oxidase family. In terms of assembly, homodimer. Forms a heterodimer with acox-1.2. Forms a heterodimer with acox-1.3; the interaction may be important for the stability of acox-1.3. It depends on FAD as a cofactor. In terms of tissue distribution, expressed in hypodermis and intestine.

It localises to the peroxisome. It catalyses the reaction nonanoyl-CoA + O2 = (2E)-nonenoyl-CoA + H2O2. It carries out the reaction dodecanoyl-CoA + O2 = (2E)-dodecenoyl-CoA + H2O2. The enzyme catalyses a 2,3-saturated acyl-CoA + O2 = a (2E)-enoyl-CoA + H2O2. The catalysed reaction is heptanoyl-CoA + O2 = (2E)-heptenoyl-CoA + H2O2. It catalyses the reaction (8R)-8-hydroxynonanoyl-CoA + O2 = (2E,8R)-8-hydroxynonenoyl-CoA + H2O2. It carries out the reaction pentanoyl-CoA + O2 = (2E)-pentenoyl-CoA + H2O2. The enzyme catalyses hexadecanoyl-CoA + O2 = (2E)-hexadecenoyl-CoA + H2O2. The catalysed reaction is IC-asc-C7-CoA + O2 = IC-asc-DeltaC7-CoA + H2O2. It catalyses the reaction IC-asc-C9-CoA + O2 = IC-asc-DeltaC9-CoA + H2O2. It carries out the reaction asc-omegaC5-CoA + O2 = asc-omegaDeltaC5-CoA + H2O2. The enzyme catalyses asc-C7-CoA + O2 = asc-DeltaC7-CoA + H2O2. The catalysed reaction is asc-omegaC7-CoA + O2 = asc-omegaDeltaC7-CoA + H2O2. It catalyses the reaction asc-C9-CoA + O2 = asc-DeltaC9-CoA + H2O2. It carries out the reaction asc-C13-CoA + O2 = asc-DeltaC13-CoA + H2O2. It functions in the pathway lipid metabolism; peroxisomal fatty acid beta-oxidation. With respect to regulation, activated by ATP. ATP binding leads to a conformational change that promotes FAD cofactor binding and enzyme activity. ATP binding likely occurs during acox-1.1 folding and/or dimer formation. Involved in the first step of peroxisomal beta-oxidation by catalyzing the desaturation of fatty acid-derived side chains. Specifically, catalyzes the desaturation of fatty acids heptanoyl-CoA (C7), nonanoyl-CoA (C9), dodecanoyl-CoA (C12) and to a lesser extent pentanoyl-CoA (C5) and hexadecanoyl-CoA (C16), and hydroxylated fatty acid hydroxynonanoyl-CoA. Also, catalyzes the desaturation fatty acid-derived side chains of ascaroside pheromones, which regulates development and behavior. Specifically, shortens ascaroside with 5-carbon omega side chain (asc-omega-C5), 7-carbon side chain (asc-C7), 9-carbon side chain (asc-C9), 11-carbon side chain (asc-C11), 13-carbon side chain (asc-C13), 15-carbon side chain (asc-C15) and to a lesser extent ascarosides with 7-omega-carbon side chain (asc-omega-C7). Also shortens indol-3-carbonyl(IC)-ascarosides with 7-carbon side chain (IC-asc-C7) and to a lesser extent (IC)-ascarosides with 9-carbon side chain (IC-asc-C9). May associate and regulate the folding and/or the catalytic activity of other acyl-coenzyme A oxidases including acox-1.2, acox-1.3, acox-1.4 and acox-3 modulating the type of ascarosides produced. In association with acox-1.3, catalyzes the desaturation of asc-C7-CoA but not of fatty acids or hydroxylated fatty acids. Involved in the biosynthesis of asc-C6-MK (daumone 2) and asc-delta-C9 (daumone 3) but not asc-C7 (daumone 1); daumones are pheromones produced during unfavourable growth conditions which promote entry into the dauer stage. The protein is Acyl-coenzyme A oxidase acox-1.1 of Caenorhabditis elegans.